Here is a 537-residue protein sequence, read N- to C-terminus: CTP synthase (537 aa).

Residues 1 to 269 form an amidoligase domain region; it reads MNQTKYIFVT…DVVALKKLDL (269 aa). A CTP-binding site is contributed by serine 15. Serine 15 serves as a coordination point for UTP. 16–21 serves as a coordination point for ATP; that stretch reads SLGKGI. L-glutamine is bound at residue tyrosine 56. An ATP-binding site is contributed by aspartate 73. Mg(2+)-binding residues include aspartate 73 and glutamate 143. Residues 150 to 152, 190 to 195, and lysine 226 contribute to the CTP site; these read DIE and KTKPTQ. UTP contacts are provided by residues 190 to 195 and lysine 226; that span reads KTKPTQ. A Glutamine amidotransferase type-1 domain is found at 295 to 537; it reads NIGLVGKYVE…VAAAVNAHKK (243 aa). Glycine 357 provides a ligand contact to L-glutamine. The active-site Nucleophile; for glutamine hydrolysis is cysteine 384. L-glutamine is bound by residues 385-388, glutamate 408, and arginine 465; that span reads LGMQ. Residues histidine 510 and glutamate 512 contribute to the active site.

It belongs to the CTP synthase family. In terms of assembly, homotetramer.

It catalyses the reaction UTP + L-glutamine + ATP + H2O = CTP + L-glutamate + ADP + phosphate + 2 H(+). It carries out the reaction L-glutamine + H2O = L-glutamate + NH4(+). The catalysed reaction is UTP + NH4(+) + ATP = CTP + ADP + phosphate + 2 H(+). The protein operates within pyrimidine metabolism; CTP biosynthesis via de novo pathway; CTP from UDP: step 2/2. With respect to regulation, allosterically activated by GTP, when glutamine is the substrate; GTP has no effect on the reaction when ammonia is the substrate. The allosteric effector GTP functions by stabilizing the protein conformation that binds the tetrahedral intermediate(s) formed during glutamine hydrolysis. Inhibited by the product CTP, via allosteric rather than competitive inhibition. In terms of biological role, catalyzes the ATP-dependent amination of UTP to CTP with either L-glutamine or ammonia as the source of nitrogen. Regulates intracellular CTP levels through interactions with the four ribonucleotide triphosphates. The protein is CTP synthase of Flavobacterium johnsoniae (strain ATCC 17061 / DSM 2064 / JCM 8514 / BCRC 14874 / CCUG 350202 / NBRC 14942 / NCIMB 11054 / UW101) (Cytophaga johnsonae).